A 283-amino-acid chain; its full sequence is Tryptophan 2,3-dioxygenase (283 aa).

Substrate contacts are provided by residues 52 to 56 (FIIQH), tyrosine 114, and arginine 118. Histidine 241 provides a ligand contact to heme. Threonine 255 is a binding site for substrate.

It belongs to the tryptophan 2,3-dioxygenase family. In terms of assembly, homotetramer. Heme serves as cofactor.

It carries out the reaction L-tryptophan + O2 = N-formyl-L-kynurenine. It functions in the pathway amino-acid degradation; L-tryptophan degradation via kynurenine pathway; L-kynurenine from L-tryptophan: step 1/2. Heme-dependent dioxygenase that catalyzes the oxidative cleavage of the L-tryptophan (L-Trp) pyrrole ring and converts L-tryptophan to N-formyl-L-kynurenine. Catalyzes the oxidative cleavage of the indole moiety. This is Tryptophan 2,3-dioxygenase from Pseudomonas fluorescens (strain ATCC BAA-477 / NRRL B-23932 / Pf-5).